We begin with the raw amino-acid sequence, 680 residues long: DNA ligase (680 aa).

Residue D32–D36 participates in NAD(+) binding. The segment at Q47 to P66 is disordered. NAD(+) is bound by residues S81–L82 and E115. K117 serves as the catalytic N6-AMP-lysine intermediate. NAD(+)-binding residues include R138, E175, K291, and K315. Positions 409, 412, 427, and 432 each coordinate Zn(2+). One can recognise a BRCT domain in the interval D602–P680.

It belongs to the NAD-dependent DNA ligase family. LigA subfamily. The cofactor is Mg(2+). Mn(2+) is required as a cofactor.

The catalysed reaction is NAD(+) + (deoxyribonucleotide)n-3'-hydroxyl + 5'-phospho-(deoxyribonucleotide)m = (deoxyribonucleotide)n+m + AMP + beta-nicotinamide D-nucleotide.. Its function is as follows. DNA ligase that catalyzes the formation of phosphodiester linkages between 5'-phosphoryl and 3'-hydroxyl groups in double-stranded DNA using NAD as a coenzyme and as the energy source for the reaction. It is essential for DNA replication and repair of damaged DNA. The sequence is that of DNA ligase from Synechococcus sp. (strain CC9605).